The primary structure comprises 98 residues: RING finger protein Z (98 aa).

A compositionally biased stretch (basic and acidic residues) spans methionine 1–glutamine 10. Residues methionine 1–leucine 26 are disordered. Glycine 2 carries N-myristoyl glycine; by host lipidation. Polar residues predominate over residues tyrosine 11–alanine 23. The RING-type; atypical zinc finger occupies cysteine 41–cysteine 77. The PTAP/PSAP motif signature appears at proline 91 to proline 94.

This sequence belongs to the arenaviridae Z protein family. Interacts with protein NP; this interaction probably directs the encapsidated genome to budding sites. Interacts (via RING domain) with polymerase L; this interaction inhibits viral transcription and replication, Z partially blocks the product exit tunnel for the releasing nascent RNA product. Interacts with the glycoprotein complex; this interaction plays a role in virion budding. Interacts with host eIF4E; this interaction results in eIF4E reduced affinity for its substrate, the 5'-m7 G cap structure. Interacts (via late-budding domain) with host TSG101; this interaction is essential for budding and release of viral particles. Interacts with host RPLP0; this interaction may serve to load ribosome-like particles inside the virion. Interacts with host PML; this interaction induces PML bodies redistribution in the cytoplasm upon viral infection. Myristoylation is required for the role of RING finger protein Z in assembly and budding.

Its subcellular location is the virion. It is found in the host cytoplasm. The protein localises to the host perinuclear region. The protein resides in the host cell membrane. Its function is as follows. Plays a crucial role in virion assembly and budding. Expressed late in the virus life cycle, it acts as an inhibitor of viral transcription and RNA synthesis by interacting with the viral polymerase L. Presumably recruits the NP encapsidated genome to cellular membranes at budding sites via direct interaction with NP. Plays critical roles in the final steps of viral release by interacting with host TSG101, a member of the vacuolar protein-sorting pathway and using other cellular host proteins involved in vesicle formation pathway. The budding of the virus progeny occurs after association of protein Z with the viral glycoprotein complex SSP-GP1-GP2 at the cell periphery, step that requires myristoylation of protein Z. Also selectively represses protein production by associating with host eIF4E. In cell-based minigenome assay, has an inhibitory effect on the ribonucleoprotein machinery (vRNP), which is responsible for the replication and transcription of the viral genome. The protein is RING finger protein Z of Chapare mammarenavirus (isolate Human/Bolivia/810419/2003).